We begin with the raw amino-acid sequence, 143 residues long: Transcription antitermination protein NusB (143 aa).

This sequence belongs to the NusB family.

In terms of biological role, involved in transcription antitermination. Required for transcription of ribosomal RNA (rRNA) genes. Binds specifically to the boxA antiterminator sequence of the ribosomal RNA (rrn) operons. The protein is Transcription antitermination protein NusB of Clostridium botulinum (strain Kyoto / Type A2).